Consider the following 208-residue polypeptide: Ribosome maturation factor RimP (208 aa).

A disordered region spans residues 189 to 208; that stretch reads EAPETGATTMARDGSEEETK.

Belongs to the RimP family.

The protein localises to the cytoplasm. Functionally, required for maturation of 30S ribosomal subunits. The sequence is that of Ribosome maturation factor RimP from Ruegeria pomeroyi (strain ATCC 700808 / DSM 15171 / DSS-3) (Silicibacter pomeroyi).